The sequence spans 410 residues: Neuroserpin (410 aa).

A signal peptide spans 1–16; that stretch reads MTYLELLALLALQSVV. Asparagine 157, asparagine 321, and asparagine 401 each carry an N-linked (GlcNAc...) asparagine glycan. A glycan (O-linked (Xyl...) (chondroitin sulfate) serine) is linked at serine 403.

The protein belongs to the serpin family. In terms of tissue distribution, detected in neurons in embryonic brain cortex (at protein level). During embryonic development mostly expressed in CNS. In adult expressed in brain and much less in spinal cord, heart, kidney and testis.

It is found in the secreted. The protein localises to the cytoplasmic vesicle. The protein resides in the secretory vesicle lumen. Its subcellular location is the perikaryon. Functionally, serine protease inhibitor that inhibits plasminogen activators and plasmin but not thrombin. May be involved in the formation or reorganization of synaptic connections as well as for synaptic plasticity in the adult nervous system. May protect neurons from cell damage by tissue-type plasminogen activator. This Mus musculus (Mouse) protein is Neuroserpin (Serpini1).